Here is a 66-residue protein sequence, read N- to C-terminus: Clarkitoxin-I-Mdum (66 aa).

4 disulfide bridges follow: cysteine 3–cysteine 24, cysteine 17–cysteine 42, cysteine 46–cysteine 59, and cysteine 60–cysteine 65.

As to expression, expressed by the venom gland.

The protein localises to the secreted. Functionally, no toxicity is observed upon intravenous or intracerebroventricular injection into mice. Has no cytotoxic activity towards C2C12 cells at 100 ug/ml. In Micrurus dumerilii (Coral snake), this protein is Clarkitoxin-I-Mdum.